A 501-amino-acid polypeptide reads, in one-letter code: Glycerol kinase (501 aa).

Residue T12 coordinates ADP. The ATP site is built by T12, T13, and S14. T12 serves as a coordination point for sn-glycerol 3-phosphate. R16 contributes to the ADP binding site. Residues R82, E83, Y134, and D244 each coordinate sn-glycerol 3-phosphate. R82, E83, Y134, D244, and Q245 together coordinate glycerol. ADP-binding residues include T266 and G310. Positions 266, 310, 314, and 411 each coordinate ATP. ADP-binding residues include G411 and N415.

Belongs to the FGGY kinase family.

The enzyme catalyses glycerol + ATP = sn-glycerol 3-phosphate + ADP + H(+). It functions in the pathway polyol metabolism; glycerol degradation via glycerol kinase pathway; sn-glycerol 3-phosphate from glycerol: step 1/1. With respect to regulation, inhibited by fructose 1,6-bisphosphate (FBP). Key enzyme in the regulation of glycerol uptake and metabolism. Catalyzes the phosphorylation of glycerol to yield sn-glycerol 3-phosphate. In Methylobacterium radiotolerans (strain ATCC 27329 / DSM 1819 / JCM 2831 / NBRC 15690 / NCIMB 10815 / 0-1), this protein is Glycerol kinase.